Here is a 195-residue protein sequence, read N- to C-terminus: Cysteine/O-acetylserine efflux protein (195 aa).

5 helical membrane-spanning segments follow: residues 47 to 67 (SLGF…LAVI), 70 to 90 (AAVH…AWKI), 105 to 125 (ISFW…LYGV), 142 to 162 (VVGV…CWAL), and 177 to 194 (QLNI…VRIF).

The protein belongs to the Rht family.

Its subcellular location is the cell inner membrane. The catalysed reaction is O-acetyl-L-serine(in) = O-acetyl-L-serine(out). The enzyme catalyses L-cysteine(in) = L-cysteine(out). In terms of biological role, exporter of O-acetylserine (OAS) and cysteine. The sequence is that of Cysteine/O-acetylserine efflux protein (eamB) from Shigella boydii serotype 4 (strain Sb227).